Here is a 584-residue protein sequence, read N- to C-terminus: Isocitrate dehydrogenase kinase/phosphatase (584 aa).

ATP-binding positions include 315-321 and lysine 336; that span reads APGVKGM. The active site involves aspartate 371.

The protein belongs to the AceK family.

It is found in the cytoplasm. The enzyme catalyses L-seryl-[isocitrate dehydrogenase] + ATP = O-phospho-L-seryl-[isocitrate dehydrogenase] + ADP + H(+). Bifunctional enzyme which can phosphorylate or dephosphorylate isocitrate dehydrogenase (IDH) on a specific serine residue. This is a regulatory mechanism which enables bacteria to bypass the Krebs cycle via the glyoxylate shunt in response to the source of carbon. When bacteria are grown on glucose, IDH is fully active and unphosphorylated, but when grown on acetate or ethanol, the activity of IDH declines drastically concomitant with its phosphorylation. This Serratia proteamaculans (strain 568) protein is Isocitrate dehydrogenase kinase/phosphatase.